A 158-amino-acid polypeptide reads, in one-letter code: Biotin carboxyl carrier protein of acetyl-CoA carboxylase (158 aa).

The region spanning Tyr-81–Glu-157 is the Biotinyl-binding domain. An N6-biotinyllysine modification is found at Lys-123.

It localises to the plastid. The protein localises to the chloroplast. The protein operates within lipid metabolism; fatty acid biosynthesis. Functionally, this protein is a component of the acetyl coenzyme A carboxylase complex; first, biotin carboxylase catalyzes the carboxylation of the carrier protein and then the transcarboxylase transfers the carboxyl group to form malonyl-CoA. This Pyropia yezoensis (Susabi-nori) protein is Biotin carboxyl carrier protein of acetyl-CoA carboxylase (accB).